A 403-amino-acid chain; its full sequence is MAAVGSPGSLESAPRIMRLVAECSRSGARAGELRLPHGTVATPVFMPVGTQATMKGITTEQLDSLGCRICLGNTYHLGLRPGPELIRKAQGLHGFMNWPHNLLTDSGGFQMVSLFSLSEVTEEGVHFRSPYDGEETLLSPERSVEIQNALGSDIIMQLDHVVSSTVTGPLVEEAMHRSVRWLDRCIAAHKHPDKQNLFAIIQGGLNADLRTTCLKEMTKRDVPGFAIGGLSGGESKAQFWKMVALSTSMLPKDKPRYLMGVGYATDLVVCVALGCDMFDCVYPTRTARFGSALVPTGNLQLKKKQYAKDFSPINPECPCPTCQTHSRAFLHALLHSDNTTALHHLTVHNIAYQLQLLSAVRSSILEQRFPDFVRNFMRTMYGDHSLCPAWAVEALASVGIMLT.

Alanine 2 carries the post-translational modification N-acetylalanine. Residue aspartate 105 is the Proton acceptor of the active site. Queuine is bound at residue aspartate 105 to phenylalanine 109. Serine 139 is modified (phosphoserine). 3 residues coordinate queuine: aspartate 159, glutamine 202, and glycine 229. The RNA binding stretch occupies residues glycine 260–aspartate 266. Aspartate 279 acts as the Nucleophile in catalysis. Residues threonine 284–arginine 288 form an RNA binding; important for wobble base 34 recognition region. Zn(2+) contacts are provided by cysteine 317, cysteine 319, cysteine 322, and histidine 348.

Belongs to the queuine tRNA-ribosyltransferase family. In terms of assembly, heterodimer of a catalytic subunit QTRT1 and an accessory subunit QTRT2. Zn(2+) is required as a cofactor. As to expression, expressed in brain, heart, kidney, liver, ling, skeletal muscle, spleen and testis.

Its subcellular location is the cytoplasm. The protein localises to the mitochondrion outer membrane. It localises to the nucleus. It carries out the reaction guanosine(34) in tRNA + queuine = queuosine(34) in tRNA + guanine. Catalytic subunit of the queuine tRNA-ribosyltransferase (TGT) that catalyzes the base-exchange of a guanine (G) residue with queuine (Q) at position 34 (anticodon wobble position) in tRNAs with GU(N) anticodons (tRNA-Asp, -Asn, -His and -Tyr), resulting in the hypermodified nucleoside queuosine (7-(((4,5-cis-dihydroxy-2-cyclopenten-1-yl)amino)methyl)-7-deazaguanosine). Catalysis occurs through a double-displacement mechanism. The nucleophile active site attacks the C1' of nucleotide 34 to detach the guanine base from the RNA, forming a covalent enzyme-RNA intermediate. The proton acceptor active site deprotonates the incoming queuine, allowing a nucleophilic attack on the C1' of the ribose to form the product. Modification of cytoplasmic tRNAs with queuosine controls the elongation speed of cognate codons, thereby ensuring the correct folding of nascent proteins to maintain proteome integrity. This is Queuine tRNA-ribosyltransferase catalytic subunit 1 from Mus musculus (Mouse).